Consider the following 1141-residue polypeptide: LRR receptor-like serine/threonine-protein kinase RGI1 (1141 aa).

Positions 1–33 (MSLHSLIFFSSSSSSLLFSFFFIFIFCFSLSDA) are cleaved as a signal peptide. Topologically, residues 34 to 726 (EQNPEASILY…DASRTRKLRL (693 aa)) are extracellular. An intrachain disulfide couples Cys-69 to Cys-77. N-linked (GlcNAc...) asparagine glycosylation occurs at Asn-71. 25 LRR repeats span residues 80-104 (QGFI…LPAF), 105-128 (RSLQ…LGDC), 130-152 (GLKV…LSKL), 153-176 (RNLE…ISKC), 178-200 (KLKS…LGKL), 202-225 (GLEV…IGDC), 226-249 (SNLT…LGKL), 250-273 (KKLE…LGNC), 275-297 (ELVD…IGQL), 298-321 (TKLE…IGNC), 322-345 (SNLK…IGRL), 347-369 (FLEE…ISNC), 370-392 (SSLV…ELGT), 394-417 (TKLT…LADC), 418-441 (TDLQ…LFML), 443-464 (NLTK…EIGN), 465-489 (CSSL…IGSL), 490-513 (KKIN…IGSC), 514-537 (SELQ…VSSL), 538-561 (SGLQ…LGRL), 563-585 (SLNK…LGMC), 586-609 (SGLQ…LGDI), 610-634 (ENLE…IASL), 636-657 (KLSI…LANI), and 658-682 (ENLV…LFRQ). An N-linked (GlcNAc...) asparagine glycan is attached at Asn-116. 2 consecutive short sequence motifs (small peptide recognition) follow at residues 185 to 186 (FD) and 207 to 210 (RIGG). N-linked (GlcNAc...) asparagine glycosylation occurs at Asn-227. Short sequence motifs (small peptide recognition) lie at residues 230-235 (VLGLAE) and Tyr-258. A glycan (N-linked (GlcNAc...) asparagine) is linked at Asn-272. The Small peptide recognition motif lies at 280-282 (FLY). A glycan (N-linked (GlcNAc...) asparagine) is linked at Asn-320. 2 consecutive short sequence motifs (small peptide recognition) follow at residues 328-331 (DLSL) and 350-352 (EFM). A glycan (N-linked (GlcNAc...) asparagine) is linked at Asn-368. Short sequence motifs (small peptide recognition) lie at residues 398-402 (LFFAW) and 424-427 (DLSR). Asn-443 carries an N-linked (GlcNAc...) asparagine glycan. Residues 446–450 (KLLLI) carry the Small peptide recognition motif. Asn-464 carries N-linked (GlcNAc...) asparagine glycosylation. Residues 470–472 (RLR) carry the Small peptide recognition motif. Asn-523 carries N-linked (GlcNAc...) asparagine glycosylation. Asn-617 is a glycosylation site (N-linked (GlcNAc...) asparagine). Residue Asn-664 is glycosylated (N-linked (GlcNAc...) asparagine). The chain crosses the membrane as a helical span at residues 727–747 (TLALLITLTVVLMILGAVAVI). Topologically, residues 748–1141 (RARRNIDNER…LLYSSSSSIE (394 aa)) are cytoplasmic. In terms of domain architecture, Protein kinase spans 786–1074 (LVEPNVIGKG…EIKQEREEYA (289 aa)). ATP-binding positions include 792–800 (IGKGCSGVV) and Lys-814. Phosphotyrosine is present on residues Tyr-868 and Tyr-906. Asp-919 (proton acceptor) is an active-site residue. A phosphotyrosine mark is found at Tyr-962 and Tyr-969.

It belongs to the protein kinase superfamily. Ser/Thr protein kinase family. In terms of assembly, interacts with beet curly top virus AL4/C4. Binds to RGF peptides such as RGF1, GLV5/CLEL1/RGF2, GLV7/CLEL3/RGF3, GLV3/RGF4, GLV10/CLEL7/RGF5 and RGF10/CLELN; these interactions trigger the formation of heterodimers with SERK1, SERK2 or BAK1/SERK3 via LRR regions. Interacts with UBP13. Phosphorylated and ubiquitinated upon interaction with RGF1, thus leading to activation a subsequent degradation. Stabilized by UBP12 and UBP13-mediated deubiquitination. Post-translationally, autophosphorylated. As to expression, expressed in roots.

The protein localises to the cell membrane. The enzyme catalyses L-seryl-[protein] + ATP = O-phospho-L-seryl-[protein] + ADP + H(+). It carries out the reaction L-threonyl-[protein] + ATP = O-phospho-L-threonyl-[protein] + ADP + H(+). Its function is as follows. Together with RGI2, RGI3, RGI4 and RGI5, acts as a receptor of RGF peptides (e.g. RGF1, GLV5/CLEL1/RGF2, GLV7/CLEL3/RGF3, GLV3/RGF4, GLV10/CLEL7/RGF5 and RGF10/CLELN), peptide hormones which maintain the postembryonic root stem cell niche by regulating the expression levels and patterns of the transcription factor PLETHORA (PLT, e.g. PLT1 and PLT2). Links RGF peptides signal with their downstream components. This is LRR receptor-like serine/threonine-protein kinase RGI1 from Arabidopsis thaliana (Mouse-ear cress).